Here is a 102-residue protein sequence, read N- to C-terminus: Small ribosomal subunit protein uS10 (102 aa).

This sequence belongs to the universal ribosomal protein uS10 family. In terms of assembly, part of the 30S ribosomal subunit.

Involved in the binding of tRNA to the ribosomes. This chain is Small ribosomal subunit protein uS10, found in Pelagibacter ubique (strain HTCC1062).